Consider the following 307-residue polypeptide: Transcription factor DIVARICATA (307 aa).

In terms of domain architecture, SANT spans 21–74 (RSTTRWTAAENKAFENALAVFDENTPNRWERVAERVPGKTVGDVMRQYKELEDD). Residues 109–133 (QSYGTGGRKSSSGRPSEQERKKGVP) are disordered. Positions 124 to 133 (SEQERKKGVP) are enriched in basic and acidic residues. Residues 126 to 182 (QERKKGVPWTEEEHKLFLMGLKKYGKGDWRNISRNFVITRTPTQVASHAQKYFIRQL) enclose the HTH myb-type domain. The H-T-H motif DNA-binding region spans 154–178 (WRNISRNFVITRTPTQVASHAQKYF). 2 stretches are compositionally biased toward polar residues: residues 196-206 (ITTVNLSDNQT) and 222-231 (MAQQQTSSTS). The segment at 196–231 (ITTVNLSDNQTPSPDNKKPPSSPDHSMAQQQTSSTS) is disordered.

The protein localises to the nucleus. Its function is as follows. Involved in the dorsovental asymmetry of flowers. Promotes ventral identity. This Antirrhinum majus (Garden snapdragon) protein is Transcription factor DIVARICATA (DIVARICATA).